An 899-amino-acid polypeptide reads, in one-letter code: MSAATEPTKEKPVNNQDSDDEDEDIDQLIEDLQSHHGLDDESEDDEHVAAGSARPVPEELLQTDPSYGLTSDEVTKRRKKYGLNQMSEETENLFVKFLMFFIGPIQFVMEAAAILAAGLEDWVDFGVICGLLFLNAAVGFIQEYQAGSIVDELKKTLANSAVVIRDGNLVEVPSNEVVPGDILQLEDGVVIPADGRLVTEDCFIQIDQSAITGESLAVDKRFGDSTFSSSTVKRGEAFMIVTATGDSTFVGRAAALVNKAAAGSGHFTEVLNGIGTILLILVIVTLLLVWVASFYRTNKIVRILRYTLAITIVGVPVGLPAVVTTTMAVGAAYLAKKQAIVQKLSAIESLAGVEILCSDKTGTLTKNKLSLHEPYTVEGVDPDDLMLTACLAASRKKKGLDAIDKAFLKSLISYPRAKAALTKYKLLEFHPFDPVSKKVTAIVESPEGERIICVKGAPLFVLKTVEEEHPIPEDVRENYENKVAELASRGFRALGVARKRGEGHWEILGVMPCMDPPRDDTAQTVNEARHLGLRVKMLTGDAVGIAKETCRQLGLGTNIYNAERLGLGGGGDMPGSELADFVENADGFAEVFPQHKYNVVEILQQRGYLVAMTGDGVNDAPSLKKADTGIAVEGATDAARSAADIVFLAPGLSAIIDALKTSRQIFHRMYSYVVYRIALSLHLEIFLGLWIAILNRSLNIDLVVFIAIFADVATLAIAYDNAPYSPKPVKWNLRRLWGMSVILGIILAIGTWITLTTMFVPKGGIIQNFGSIDGVLFLQISLTENWLIFITRAAGPFWSSIPSWQLSGAVLIVDIIATMFCLFGWWSQNWNDIVTVVRVWIFSFGVFCVMGGAYYMMSESEAFDRFMNGKSRRDKPSGRSVEDFLMAMQRVSTQHEKEN.

Residues 1–72 form a disordered region; that stretch reads MSAATEPTKE…TDPSYGLTSD (72 aa). At 1–96 the chain is on the cytoplasmic side; it reads MSAATEPTKE…SEETENLFVK (96 aa). Over residues 17-29 the composition is skewed to acidic residues; the sequence is DSDDEDEDIDQLI. A helical membrane pass occupies residues 97–117; that stretch reads FLMFFIGPIQFVMEAAAILAA. The Extracellular portion of the chain corresponds to 118–121; that stretch reads GLED. The chain crosses the membrane as a helical span at residues 122-141; sequence WVDFGVICGLLFLNAAVGFI. The Cytoplasmic portion of the chain corresponds to 142-272; sequence QEYQAGSIVD…GSGHFTEVLN (131 aa). The helical transmembrane segment at 273-294 threads the bilayer; it reads GIGTILLILVIVTLLLVWVASF. The Extracellular portion of the chain corresponds to 295-305; that stretch reads YRTNKIVRILR. A helical membrane pass occupies residues 306–328; that stretch reads YTLAITIVGVPVGLPAVVTTTMA. The Cytoplasmic segment spans residues 329–700; it reads VGAAYLAKKQ…IAILNRSLNI (372 aa). Asp359 serves as the catalytic 4-aspartylphosphate intermediate. Mg(2+)-binding residues include Asp615 and Asp619. A helical transmembrane segment spans residues 701-719; sequence DLVVFIAIFADVATLAIAY. Residues 720–735 are Extracellular-facing; sequence DNAPYSPKPVKWNLRR. Residues 736–755 form a helical membrane-spanning segment; that stretch reads LWGMSVILGIILAIGTWITL. Topologically, residues 756–805 are cytoplasmic; sequence TTMFVPKGGIIQNFGSIDGVLFLQISLTENWLIFITRAAGPFWSSIPSWQ. Residues 806-826 traverse the membrane as a helical segment; the sequence is LSGAVLIVDIIATMFCLFGWW. The Extracellular segment spans residues 827-838; that stretch reads SQNWNDIVTVVR. A helical transmembrane segment spans residues 839–855; the sequence is VWIFSFGVFCVMGGAYY. At 856–899 the chain is on the cytoplasmic side; it reads MMSESEAFDRFMNGKSRRDKPSGRSVEDFLMAMQRVSTQHEKEN.

The protein belongs to the cation transport ATPase (P-type) (TC 3.A.3) family. Type IIIA subfamily.

The protein resides in the cell membrane. It catalyses the reaction ATP + H2O + H(+)(in) = ADP + phosphate + 2 H(+)(out). With respect to regulation, activated by high pH or also by potassium ions when the medium pH is low. Its function is as follows. The plasma membrane ATPase of plants and fungi is a hydrogen ion pump. The proton gradient it generates drives the active transport of nutrients by H(+)-symport. The resulting external acidification and/or internal alkinization may mediate growth responses. The sequence is that of Plasma membrane ATPase (PMA1) from Kluyveromyces lactis (strain ATCC 8585 / CBS 2359 / DSM 70799 / NBRC 1267 / NRRL Y-1140 / WM37) (Yeast).